A 350-amino-acid chain; its full sequence is UPF0284 protein MJ1598 (350 aa).

Belongs to the UPF0284 family.

This Methanocaldococcus jannaschii (strain ATCC 43067 / DSM 2661 / JAL-1 / JCM 10045 / NBRC 100440) (Methanococcus jannaschii) protein is UPF0284 protein MJ1598.